Here is a 704-residue protein sequence, read N- to C-terminus: Neutral ceramidase (704 aa).

The first 23 residues, 1–23 (MANSKMAFLAFLAVSFLCGLVSA), serve as a signal peptide directing secretion. The N-linked (GlcNAc...) asparagine glycan is linked to asparagine 230. The active-site Nucleophile is serine 276. 3 N-linked (GlcNAc...) asparagine glycosylation sites follow: asparagine 362, asparagine 550, and asparagine 598.

The protein belongs to the neutral ceramidase family. In terms of processing, N-glycosylated. Widely expressed in different tissues but enriched in neurons at all stages of development.

It localises to the secreted. The catalysed reaction is an N-acylsphing-4-enine + H2O = sphing-4-enine + a fatty acid. Hydrolyzes the sphingolipid ceramide into sphingosine and free fatty acid at an optimal pH of 6.5-7.5. Acts as a key regulator of sphingolipid signaling metabolites by generating sphingosine at the cell surface. Regulates synaptic vesicle exocytosis and trafficking by controlling presynaptic terminal sphingolipid composition. In Drosophila melanogaster (Fruit fly), this protein is Neutral ceramidase (CDase).